Reading from the N-terminus, the 678-residue chain is DNA ligase (678 aa).

NAD(+)-binding positions include 47 to 51 (DSDYD), 96 to 97 (SL), and E122. K124 functions as the N6-AMP-lysine intermediate in the catalytic mechanism. 4 residues coordinate NAD(+): R145, E182, K300, and K324. Zn(2+) contacts are provided by C418, C421, C436, and C442. The 77-residue stretch at 602-678 (AYNESFTGKT…ILEDNLKDLL (77 aa)) folds into the BRCT domain.

It belongs to the NAD-dependent DNA ligase family. LigA subfamily. Requires Mg(2+) as cofactor. It depends on Mn(2+) as a cofactor.

The enzyme catalyses NAD(+) + (deoxyribonucleotide)n-3'-hydroxyl + 5'-phospho-(deoxyribonucleotide)m = (deoxyribonucleotide)n+m + AMP + beta-nicotinamide D-nucleotide.. Functionally, DNA ligase that catalyzes the formation of phosphodiester linkages between 5'-phosphoryl and 3'-hydroxyl groups in double-stranded DNA using NAD as a coenzyme and as the energy source for the reaction. It is essential for DNA replication and repair of damaged DNA. This Francisella tularensis subsp. holarctica (strain FTNF002-00 / FTA) protein is DNA ligase.